The sequence spans 238 residues: Orotidine 5'-phosphate decarboxylase (238 aa).

Substrate-binding positions include Asp-10, Lys-32, 59–68, Thr-122, Arg-184, Gln-193, Gly-213, and Arg-214; that span reads DLKLHDIPNT. Lys-61 acts as the Proton donor in catalysis.

This sequence belongs to the OMP decarboxylase family. Type 1 subfamily. As to quaternary structure, homodimer.

The enzyme catalyses orotidine 5'-phosphate + H(+) = UMP + CO2. Its pathway is pyrimidine metabolism; UMP biosynthesis via de novo pathway; UMP from orotate: step 2/2. Catalyzes the decarboxylation of orotidine 5'-monophosphate (OMP) to uridine 5'-monophosphate (UMP). This Bacillus cereus (strain Q1) protein is Orotidine 5'-phosphate decarboxylase.